We begin with the raw amino-acid sequence, 137 residues long: Large ribosomal subunit protein uL16 (137 aa).

The protein belongs to the universal ribosomal protein uL16 family. Part of the 50S ribosomal subunit.

Its function is as follows. Binds 23S rRNA and is also seen to make contacts with the A and possibly P site tRNAs. The chain is Large ribosomal subunit protein uL16 from Dinoroseobacter shibae (strain DSM 16493 / NCIMB 14021 / DFL 12).